The chain runs to 529 residues: BAR/IMD domain-containing adapter protein 2-like 2 (529 aa).

Residues 1 to 239 form the IMD domain; that stretch reads MAPEMDQFYR…HSPGLLGPAL (239 aa). Disordered regions lie at residues 221 to 327 and 403 to 510; these read EASR…GGAR and TSMS…TNPF. Residues S231, S272, and S302 each carry the phosphoserine modification. The segment covering 299–313 has biased composition (low complexity); it reads SASSLYSGSAQSSRS. An SH3 domain is found at 324-387; that stretch reads GGARRVRALV…PEAYVKALEE (64 aa). Low complexity-rich tracts occupy residues 403 to 413 and 452 to 462; these read TSMSPMTPMNP and RSRTPSRVPSR. Positions 463–472 are enriched in pro residues; the sequence is APSPAPPPLP. S478 and S481 each carry phosphoserine.

Expressed in the epithelial layer of the intestine (at protein level).

It localises to the cell membrane. The protein localises to the cell junction. The protein resides in the cytoplasmic vesicle membrane. Phosphoinositides-binding protein that induces the formation of planar or gently curved membrane structures. Binds to phosphoinositides, including to phosphatidylinositol 4,5-bisphosphate (PtdIns(4,5)P2) headgroups. There seems to be no clear preference for a specific phosphoinositide. The polypeptide is BAR/IMD domain-containing adapter protein 2-like 2 (BAIAP2L2) (Homo sapiens (Human)).